A 119-amino-acid polypeptide reads, in one-letter code: Fluoride-specific ion channel FluC 1 (119 aa).

The next 4 membrane-spanning stretches (helical) occupy residues 6-26, 31-51, 66-86, and 91-111; these read VALV…IAVV, FPWG…AIVY, VVAT…GETI, and RLAA…VLVA.

The protein belongs to the fluoride channel Fluc/FEX (TC 1.A.43) family.

The protein localises to the cell membrane. The enzyme catalyses fluoride(in) = fluoride(out). In terms of biological role, fluoride-specific ion channel. Important for reducing fluoride concentration in the cell, thus reducing its toxicity. The sequence is that of Fluoride-specific ion channel FluC 1 from Natronomonas pharaonis (strain ATCC 35678 / DSM 2160 / CIP 103997 / JCM 8858 / NBRC 14720 / NCIMB 2260 / Gabara) (Halobacterium pharaonis).